A 232-amino-acid polypeptide reads, in one-letter code: UPF0758 protein FN0909 (232 aa).

The MPN domain maps to 110–232 (KISNKDILLK…YFSFLEEGLI (123 aa)). 3 residues coordinate Zn(2+): H181, H183, and D194. The JAMM motif motif lies at 181-194 (HNHPSDNITPSKSD).

Belongs to the UPF0758 family.

The protein is UPF0758 protein FN0909 of Fusobacterium nucleatum subsp. nucleatum (strain ATCC 25586 / DSM 15643 / BCRC 10681 / CIP 101130 / JCM 8532 / KCTC 2640 / LMG 13131 / VPI 4355).